The following is a 545-amino-acid chain: Chaperonin GroEL (545 aa).

Residues 30-33 (TLGP), K51, 87-91 (DGTTT), G415, 479-481 (NAA), and D495 each bind ATP.

This sequence belongs to the chaperonin (HSP60) family. As to quaternary structure, forms a cylinder of 14 subunits composed of two heptameric rings stacked back-to-back. Interacts with the co-chaperonin GroES.

The protein localises to the cytoplasm. The catalysed reaction is ATP + H2O + a folded polypeptide = ADP + phosphate + an unfolded polypeptide.. Functionally, together with its co-chaperonin GroES, plays an essential role in assisting protein folding. The GroEL-GroES system forms a nano-cage that allows encapsulation of the non-native substrate proteins and provides a physical environment optimized to promote and accelerate protein folding. The polypeptide is Chaperonin GroEL (Salmonella agona (strain SL483)).